The sequence spans 681 residues: MASTLAPITSTLAAVTASAPPKYDNLWMLILGFIIAFVLAFSVGANDVANSFGTAVGSGVVTLKQACILASIFETVGSALLGAKVSETIRKGLIDVEKYNATQDLLMAGSVSAMFGSAVWQLVASFLKLPISGTHCIVGATIGFSLVAKGQEGIKWSELIKIVMSWFVSPLLSGIMSGILFFLVRAFILRKADPVPNGLRALPIFYACTIGINLFSIMYTGAPLLGFDKLPLWGTILISVGCAVFCALIVWFFVCPRMKRKIEREVKSSPSESPLMEKKNNLKDHEETKMAPGDVENRNPVSEVVCATGPLRAVVEERTVSFKLGDLEEAPERERLPMDLKEETNIDGTINGAVQLPNGNLVQFSQTVSNQINSSGHYQYHTVHKDSGLYKELLHKLHLAKVGDCMGDSGDKPLRRNNSYTSYTMAICGMPLDSFRAKEGEQKGDEMETLTWPNADTKKRIRMDSYTSYCNAVSDLHSESEMDMSVKAEMGLGDRKGSSGSLEEWYDQDKPEVSLLFQFLQILTACFGSFAHGGNDVSNAIGPLVALYLVYETRDVTTKEATPIWLLLYGGVGICMGLWVWGRRVIQTMGKDLTPITPSSGFSIELASAFTVVVASNIGLPISTTHCKVGSVVSVGWLRSKKAVDWRLFRNIFMAWFVTVPISGVISAAIMAVFKHIILPV.

6 helical membrane-spanning segments follow: residues 25–45 (NLWM…SVGA), 66–86 (ACIL…AKVS), 106–126 (LMAG…VASF), 162–182 (IVMS…ILFF), 201–221 (ALPI…MYTG), and 234–254 (GTIL…WFFV). The segment at 266–295 (VKSSPSESPLMEKKNNLKDHEETKMAPGDV) is disordered. Ser-269 and Ser-273 each carry phosphoserine. Over residues 275–289 (LMEKKNNLKDHEETK) the composition is skewed to basic and acidic residues. 4 helical membrane-spanning segments follow: residues 513–533 (VSLL…FAHG), 561–581 (ATPI…LWVW), 602–622 (FSIE…GLPI), and 652–672 (IFMA…AIMA).

Belongs to the inorganic phosphate transporter (PiT) (TC 2.A.20) family. In terms of tissue distribution, ubiquitously expressed.

The protein localises to the cell membrane. The catalysed reaction is 2 Na(+)(out) + phosphate(out) = 2 Na(+)(in) + phosphate(in). In terms of biological role, sodium-phosphate symporter which preferentially transports the monovalent form of phosphate with a stoichiometry of two sodium ions per phosphate ion. May play a role in extracellular matrix and cartilage calcification as well as in vascular calcification. Essential for cell proliferation but this function is independent of its phosphate transporter activity. The protein is Sodium-dependent phosphate transporter 1 (Slc20a1) of Rattus norvegicus (Rat).